The primary structure comprises 399 residues: S-adenosylmethionine synthase (399 aa).

An ATP-binding site is contributed by H17. Residue D19 coordinates Mg(2+). Position 45 (E45) interacts with K(+). Positions 58 and 101 each coordinate L-methionine. Residues 101–111 are flexible loop; the sequence is QSADIAMGVDQ. ATP-binding positions include 177 to 179, 244 to 245, D253, 259 to 260, A276, and K280; these read DGK, RF, and RK. D253 lines the L-methionine pocket. Residue K284 coordinates L-methionine.

It belongs to the AdoMet synthase family. As to quaternary structure, homotetramer; dimer of dimers. Mg(2+) is required as a cofactor. K(+) serves as cofactor.

It localises to the cytoplasm. The catalysed reaction is L-methionine + ATP + H2O = S-adenosyl-L-methionine + phosphate + diphosphate. Its pathway is amino-acid biosynthesis; S-adenosyl-L-methionine biosynthesis; S-adenosyl-L-methionine from L-methionine: step 1/1. Catalyzes the formation of S-adenosylmethionine (AdoMet) from methionine and ATP. The overall synthetic reaction is composed of two sequential steps, AdoMet formation and the subsequent tripolyphosphate hydrolysis which occurs prior to release of AdoMet from the enzyme. In Bacillus anthracis (strain A0248), this protein is S-adenosylmethionine synthase.